Reading from the N-terminus, the 210-residue chain is uncharacterized protein (210 aa).

A signal peptide spans methionine 1 to glycine 17. The N-palmitoyl cysteine moiety is linked to residue cysteine 18. A lipid anchor (S-diacylglycerol cysteine) is attached at cysteine 18. Residues glutamate 176–glutamate 195 show a composition bias toward polar residues. Positions glutamate 176 to arginine 210 are disordered. Basic and acidic residues predominate over residues threonine 196–arginine 210.

The protein resides in the cell membrane. This is an uncharacterized protein from Bacillus subtilis (strain 168).